A 273-amino-acid polypeptide reads, in one-letter code: Dermonecrotic toxin LhSicTox-alphaIA2aii (273 aa).

The active site involves H5. 2 residues coordinate Mg(2+): E25 and D27. H41 functions as the Nucleophile in the catalytic mechanism. 2 disulfide bridges follow: C45–C51 and C47–C190. D85 contributes to the Mg(2+) binding site.

This sequence belongs to the arthropod phospholipase D family. Class II subfamily. Requires Mg(2+) as cofactor. In terms of tissue distribution, expressed by the venom gland.

It is found in the secreted. It carries out the reaction an N-(acyl)-sphingosylphosphocholine = an N-(acyl)-sphingosyl-1,3-cyclic phosphate + choline. The catalysed reaction is an N-(acyl)-sphingosylphosphoethanolamine = an N-(acyl)-sphingosyl-1,3-cyclic phosphate + ethanolamine. The enzyme catalyses a 1-acyl-sn-glycero-3-phosphocholine = a 1-acyl-sn-glycero-2,3-cyclic phosphate + choline. It catalyses the reaction a 1-acyl-sn-glycero-3-phosphoethanolamine = a 1-acyl-sn-glycero-2,3-cyclic phosphate + ethanolamine. In terms of biological role, dermonecrotic toxins cleave the phosphodiester linkage between the phosphate and headgroup of certain phospholipids (sphingolipid and lysolipid substrates), forming an alcohol (often choline) and a cyclic phosphate. This toxin acts on sphingomyelin (SM). It may also act on ceramide phosphoethanolamine (CPE), lysophosphatidylcholine (LPC) and lysophosphatidylethanolamine (LPE), but not on lysophosphatidylserine (LPS), and lysophosphatidylglycerol (LPG). It acts by transphosphatidylation, releasing exclusively cyclic phosphate products as second products. Induces dermonecrosis, hemolysis, increased vascular permeability, edema, inflammatory response, and platelet aggregation. The protein is Dermonecrotic toxin LhSicTox-alphaIA2aii of Loxosceles hirsuta (Recluse spider).